We begin with the raw amino-acid sequence, 133 residues long: Arginine decarboxylase proenzyme (133 aa).

The active-site Schiff-base intermediate with substrate; via pyruvic acid is the Ser81. Ser81 carries the pyruvic acid (Ser); by autocatalysis modification. Residue His86 is the Proton acceptor; for processing activity of the active site. The active-site Proton donor; for catalytic activity is the Cys101.

The protein belongs to the prokaryotic AdoMetDC family. Type 1 subfamily. As to quaternary structure, heterooctamer of four alpha and four beta chains arranged as a tetramer of alpha/beta heterodimers. Pyruvate is required as a cofactor. Is synthesized initially as an inactive proenzyme. Formation of the active enzyme involves a self-maturation process in which the active site pyruvoyl group is generated from an internal serine residue via an autocatalytic post-translational modification. Two non-identical subunits are generated from the proenzyme in this reaction, and the pyruvate is formed at the N-terminus of the alpha chain, which is derived from the carboxyl end of the proenzyme. The post-translation cleavage follows an unusual pathway, termed non-hydrolytic serinolysis, in which the side chain hydroxyl group of the serine supplies its oxygen atom to form the C-terminus of the beta chain, while the remainder of the serine residue undergoes an oxidative deamination to produce ammonia and the pyruvoyl group blocking the N-terminus of the alpha chain.

The catalysed reaction is L-arginine + H(+) = agmatine + CO2. It participates in amine and polyamine biosynthesis; agmatine biosynthesis; agmatine from L-arginine: step 1/1. Functionally, specifically catalyzes the decarboxylation of L-arginine to agmatine. Has no S-adenosylmethionine decarboxylase (AdoMetDC) activity. The polypeptide is Arginine decarboxylase proenzyme (Pyrobaculum arsenaticum (strain DSM 13514 / JCM 11321 / PZ6)).